The primary structure comprises 169 residues: Diuretic hormone 44 (169 aa).

The signal sequence occupies residues Met1–Ser18. Residues Ala19–Arg96 constitute a propeptide that is removed on maturation. The stretch at Met83–Ile108 forms a coiled coil. The residue at position 97 (Gln97) is a Pyrrolidone carboxylic acid. Isoleucine amide is present on Ile108. Residues Gly109–Leu169 constitute a propeptide that is removed on maturation.

Post-translationally, residues Ile-66 to Gly-109 may constitute another form of the DH44 peptide, which has not been detected yet. In terms of tissue distribution, expressed in brain, ventral ganglia and the retrocerebral complex (at protein level).

The protein localises to the secreted. Regulation of fluid secretion. This chain is Diuretic hormone 44, found in Camponotus floridanus (Florida carpenter ant).